The chain runs to 1436 residues: ABC transporter C family member 15 (1436 aa).

A run of 7 helical transmembrane segments spans residues 8–28, 129–149, 165–185, 238–258, 261–281, 349–369, and 373–393; these read IINKIINFFSTIYILCKIYLY, YIATGLFVFVSVFSFITPLIL, IYIGIIQCFLLFLSSFINMAS, FFQYFFCHYYIEIFLFPIQIL, LGFLIYVIGIAGFVGFLVMLI, IIYWVLVQIVTQASSGLVLVS, and TYTLLGYEVSLEIAFTSITIL. Positions 128-412 constitute an ABC transmembrane type-1 1 domain; that stretch reads NYIATGLFVF…LPDCLHKFIS (285 aa). The ABC transporter 1 domain occupies 543 to 766; that stretch reads ADYQDLLSIN…IDFEMILKEK (224 aa). Position 575 to 582 (575 to 582) interacts with ATP; sequence GGVRSGKT. The region spanning 865-1155 is the ABC transmembrane type-1 2 domain; that stretch reads KKYIRMGSSI…FMRQFGELES (291 aa). 6 consecutive transmembrane segments (helical) span residues 873 to 893, 919 to 939, 985 to 1005, 1017 to 1039, 1101 to 1121, and 1127 to 1147; these read SISFFIFTCIIYLTSQIILLL, LIYLAYIGGFVFTLGVRYLLI, IDILLLDCFSDVLYCGACLVT, IAIPFVILIAINYIFQLFYNYSV, IGIRVEFLSAIVVLMSALFSI, and GLSALGVTTALGITFNLNWFM. In terms of domain architecture, ABC transporter 2 spans 1193-1426; the sequence is IEFKNVEIRY…STSRFSKLIK (234 aa). Position 1227–1234 (1227–1234) interacts with ATP; it reads GRSGSGKS.

The protein belongs to the ABC transporter superfamily. ABCC family. Conjugate transporter (TC 3.A.1.208) subfamily.

The protein localises to the membrane. The polypeptide is ABC transporter C family member 15 (abcC15) (Dictyostelium discoideum (Social amoeba)).